The sequence spans 160 residues: NADH-quinone oxidoreductase subunit I (160 aa).

4Fe-4S ferredoxin-type domains lie at 51–80 and 91–120; these read RRYK…IEAA and TKYD…EGPN. 8 residues coordinate [4Fe-4S] cluster: cysteine 60, cysteine 63, cysteine 66, cysteine 70, cysteine 100, cysteine 103, cysteine 106, and cysteine 110.

The protein belongs to the complex I 23 kDa subunit family. NDH-1 is composed of 14 different subunits. Subunits NuoA, H, J, K, L, M, N constitute the membrane sector of the complex. [4Fe-4S] cluster serves as cofactor.

It localises to the cell inner membrane. The enzyme catalyses a quinone + NADH + 5 H(+)(in) = a quinol + NAD(+) + 4 H(+)(out). In terms of biological role, NDH-1 shuttles electrons from NADH, via FMN and iron-sulfur (Fe-S) centers, to quinones in the respiratory chain. The immediate electron acceptor for the enzyme in this species is believed to be ubiquinone. Couples the redox reaction to proton translocation (for every two electrons transferred, four hydrogen ions are translocated across the cytoplasmic membrane), and thus conserves the redox energy in a proton gradient. This Neorickettsia sennetsu (strain ATCC VR-367 / Miyayama) (Ehrlichia sennetsu) protein is NADH-quinone oxidoreductase subunit I.